The following is a 290-amino-acid chain: Thymidylate synthase (290 aa).

Residues R27 and 152 to 153 each bind dUMP; that span reads RR. Catalysis depends on C172, which acts as the Nucleophile. Residues 192-195, N203, and 233-235 each bind dUMP; these read RSAD and HVY. A (6R)-5,10-methylene-5,6,7,8-tetrahydrofolate-binding site is contributed by D195. Residue A289 participates in (6R)-5,10-methylene-5,6,7,8-tetrahydrofolate binding.

The protein belongs to the thymidylate synthase family. In terms of assembly, homodimer.

It carries out the reaction dUMP + (6R)-5,10-methylene-5,6,7,8-tetrahydrofolate = 7,8-dihydrofolate + dTMP. It participates in pyrimidine metabolism; dTTP biosynthesis. This Ateles protein is Thymidylate synthase (TS).